The sequence spans 156 residues: Succinate dehydrogenase assembly factor 2-B, mitochondrial (156 aa).

Residues 1-24 (MLRQLIVSTVGRRMPLQMISQSRL) constitute a mitochondrion transit peptide.

Belongs to the SDHAF2 family. Interacts with the flavoprotein subunit within the SDH catalytic dimer.

Its subcellular location is the mitochondrion matrix. Plays an essential role in the assembly of succinate dehydrogenase (SDH), an enzyme complex (also referred to as respiratory complex II) that is a component of both the tricarboxylic acid (TCA) cycle and the mitochondrial electron transport chain, and which couples the oxidation of succinate to fumarate with the reduction of ubiquinone (coenzyme Q) to ubiquinol. Required for flavinylation (covalent attachment of FAD) of the flavoprotein subunit of the SDH catalytic dimer. The sequence is that of Succinate dehydrogenase assembly factor 2-B, mitochondrial from Drosophila erecta (Fruit fly).